Reading from the N-terminus, the 83-residue chain is Large ribosomal subunit protein eL14 (83 aa).

Belongs to the eukaryotic ribosomal protein eL14 family.

This is Large ribosomal subunit protein eL14 from Thermococcus onnurineus (strain NA1).